Consider the following 392-residue polypeptide: Phosphoglycerate kinase (392 aa).

Substrate is bound by residues 21 to 23, R36, 59 to 62, R118, and R151; these read DFN and HLGR. ATP contacts are provided by residues K201, G292, E323, and 349 to 352; that span reads GGDS.

It belongs to the phosphoglycerate kinase family. In terms of assembly, monomer.

The protein localises to the cytoplasm. The enzyme catalyses (2R)-3-phosphoglycerate + ATP = (2R)-3-phospho-glyceroyl phosphate + ADP. Its pathway is carbohydrate degradation; glycolysis; pyruvate from D-glyceraldehyde 3-phosphate: step 2/5. The sequence is that of Phosphoglycerate kinase from Borrelia turicatae (strain 91E135).